Consider the following 237-residue polypeptide: Adenosine 5'-phosphosulfate reductase (237 aa).

[4Fe-4S] cluster-binding residues include Cys123, Cys124, Cys206, and Cys209. The active-site Nucleophile; cysteine thiosulfonate intermediate is Cys232.

The protein belongs to the PAPS reductase family. CysH subfamily. [4Fe-4S] cluster is required as a cofactor.

It localises to the cytoplasm. It carries out the reaction [thioredoxin]-disulfide + sulfite + AMP + 2 H(+) = adenosine 5'-phosphosulfate + [thioredoxin]-dithiol. The protein operates within sulfur metabolism; hydrogen sulfide biosynthesis; sulfite from sulfate. Functionally, catalyzes the formation of sulfite from adenosine 5'-phosphosulfate (APS) using thioredoxin as an electron donor. This chain is Adenosine 5'-phosphosulfate reductase, found in Mycobacteroides abscessus (strain ATCC 19977 / DSM 44196 / CCUG 20993 / CIP 104536 / JCM 13569 / NCTC 13031 / TMC 1543 / L948) (Mycobacterium abscessus).